We begin with the raw amino-acid sequence, 157 residues long: UPF0756 membrane protein ABC2716 (157 aa).

A run of 4 helical transmembrane segments spans residues 8–28, 54–74, 84–104, and 117–137; these read FLLLLMAIALIAKNQSLIIAI, LGVTIITIAVLVPIATGDIGF, LYAWVALGSGIAVALVAASGI, and LVLGTIVAVSFLNGVAVGPLI.

It belongs to the UPF0756 family.

It localises to the cell membrane. This chain is UPF0756 membrane protein ABC2716, found in Shouchella clausii (strain KSM-K16) (Alkalihalobacillus clausii).